The chain runs to 561 residues: Sesquiterpene synthase 1 (561 aa).

The Mg(2+) site is built by D313, D317, D458, and E466. The DDXXD motif motif lies at 313–317 (DDIYD).

Belongs to the terpene synthase family. Tpsa subfamily. Mn(2+) serves as cofactor. Mg(2+) is required as a cofactor.

The protein resides in the cytoplasm. It catalyses the reaction (2E,6E)-farnesyl diphosphate = (1S,8aR)-delta-cadinene + diphosphate. It functions in the pathway secondary metabolite biosynthesis; terpenoid biosynthesis. In terms of biological role, involved in the biosynthesis of delta-cadinene. This is Sesquiterpene synthase 1 (STS1) from Thapsia garganica (Deadly carrot).